We begin with the raw amino-acid sequence, 541 residues long: Chaperonin GroEL 1 (541 aa).

Residues 30–33, 87–91, glycine 414, 478–480, and aspartate 494 contribute to the ATP site; these read TLGP, DGTTT, and NAA.

It belongs to the chaperonin (HSP60) family. In terms of assembly, forms a cylinder of 14 subunits composed of two heptameric rings stacked back-to-back. Interacts with the co-chaperonin GroES.

It is found in the cytoplasm. The catalysed reaction is ATP + H2O + a folded polypeptide = ADP + phosphate + an unfolded polypeptide.. Together with its co-chaperonin GroES, plays an essential role in assisting protein folding. The GroEL-GroES system forms a nano-cage that allows encapsulation of the non-native substrate proteins and provides a physical environment optimized to promote and accelerate protein folding. This chain is Chaperonin GroEL 1, found in Thermobifida fusca (strain YX).